The following is a 132-amino-acid chain: mRNA interferase toxin YafO (132 aa).

Probably forms a complex with the antitoxin YafN which inhibits the mRNA interferase activity.

In terms of biological role, toxic component of a type II toxin-antitoxin (TA) system. A translation-dependent mRNA interferase. Overexpression causes cessation of cell growth and inhibits cell proliferation via inhibition of translation; this blockage is overcome by subsequent expression of antitoxin YafN. Overexpression causes cleavage of a number of mRNAs in a ribosome-dependent fashion. YafO binding to the 50S ribosomal subunit in the translation complex induces mRNA cleavage 3' to the region protected by the ribosome; YafO alone is not able to digest mRNA. The sequence is that of mRNA interferase toxin YafO (yafO) from Escherichia coli (strain K12).